Consider the following 333-residue polypeptide: Lipoyl synthase (333 aa).

Positions 1-15 are enriched in polar residues; that stretch reads MSTLVESPVPSNDSQ. A disordered region spans residues 1-34; the sequence is MSTLVESPVPSNDSQAAAPAAYDPTQKQKSQAKT. Residues cysteine 80, cysteine 85, cysteine 91, cysteine 106, cysteine 110, cysteine 113, and serine 320 each contribute to the [4Fe-4S] cluster site. Positions 91–309 constitute a Radical SAM core domain; that stretch reads CFGKGTATFM…EREAYAMGFT (219 aa).

This sequence belongs to the radical SAM superfamily. Lipoyl synthase family. [4Fe-4S] cluster is required as a cofactor.

It localises to the cytoplasm. The enzyme catalyses [[Fe-S] cluster scaffold protein carrying a second [4Fe-4S](2+) cluster] + N(6)-octanoyl-L-lysyl-[protein] + 2 oxidized [2Fe-2S]-[ferredoxin] + 2 S-adenosyl-L-methionine + 4 H(+) = [[Fe-S] cluster scaffold protein] + N(6)-[(R)-dihydrolipoyl]-L-lysyl-[protein] + 4 Fe(3+) + 2 hydrogen sulfide + 2 5'-deoxyadenosine + 2 L-methionine + 2 reduced [2Fe-2S]-[ferredoxin]. Its pathway is protein modification; protein lipoylation via endogenous pathway; protein N(6)-(lipoyl)lysine from octanoyl-[acyl-carrier-protein]: step 2/2. Its function is as follows. Catalyzes the radical-mediated insertion of two sulfur atoms into the C-6 and C-8 positions of the octanoyl moiety bound to the lipoyl domains of lipoate-dependent enzymes, thereby converting the octanoylated domains into lipoylated derivatives. The chain is Lipoyl synthase from Bordetella parapertussis (strain 12822 / ATCC BAA-587 / NCTC 13253).